The sequence spans 481 residues: MQVADKTVVIAGLGVSGTSLAEVLRERGTHVIGVDERKPEADLHSFDDVDWDHVDYVMSSPVFNPRTPFVLEAQRRGIPVMSEVEFAWQLRVNNERTGTPAPWIGITGTNGKTSTTEMTSEMLTACGLDAPTAGNIASGDMSMSLSRCATNPQHDVLCVELSSFQLHFTDSLALDCAAITNIADDHLDWHGGRENYAADKSKVFHNAKRAIVYNAQDAKVSELAAEAQTAEGCRKVGFTLEAPQAGQIGIEDGWIVDRSGVAGGAVGESVRLAAITDFTHLAEPDGSLYPHLVADALTALALVLGLGADRDTALKALTSFKPGGHRIETVAEAAVEGGSVRFVDDSKATNGHAARASLSSFPAKSVIWIAGGLAKGSRFEDLVKDQAHTIKAAVIIGKDQQPMIEAFASQAPDIPVTIIDPEDNDTVMDRAVEACGTYTAAGDIVLMAPACASMDQFKSYADRGNRFAAAAKTWSEVHGLH.

108–114 (GTNGKTS) lines the ATP pocket.

Belongs to the MurCDEF family.

The protein localises to the cytoplasm. The catalysed reaction is UDP-N-acetyl-alpha-D-muramoyl-L-alanine + D-glutamate + ATP = UDP-N-acetyl-alpha-D-muramoyl-L-alanyl-D-glutamate + ADP + phosphate + H(+). Its pathway is cell wall biogenesis; peptidoglycan biosynthesis. In terms of biological role, cell wall formation. Catalyzes the addition of glutamate to the nucleotide precursor UDP-N-acetylmuramoyl-L-alanine (UMA). The polypeptide is UDP-N-acetylmuramoylalanine--D-glutamate ligase (Bifidobacterium longum (strain DJO10A)).